The chain runs to 378 residues: UPF0754 membrane protein Exig_0680 (378 aa).

A run of 2 helical transmembrane segments spans residues valine 5–threonine 25 and isoleucine 357–isoleucine 377.

It belongs to the UPF0754 family.

Its subcellular location is the cell membrane. The chain is UPF0754 membrane protein Exig_0680 from Exiguobacterium sibiricum (strain DSM 17290 / CCUG 55495 / CIP 109462 / JCM 13490 / 255-15).